A 78-amino-acid polypeptide reads, in one-letter code: Acyl carrier protein (78 aa).

Residues 2–77 (SDTADRVQKI…DATKYIEEHK (76 aa)) enclose the Carrier domain. The residue at position 37 (Ser-37) is an O-(pantetheine 4'-phosphoryl)serine.

It belongs to the acyl carrier protein (ACP) family. 4'-phosphopantetheine is transferred from CoA to a specific serine of apo-ACP by AcpS. This modification is essential for activity because fatty acids are bound in thioester linkage to the sulfhydryl of the prosthetic group.

The protein localises to the cytoplasm. It participates in lipid metabolism; fatty acid biosynthesis. Carrier of the growing fatty acid chain in fatty acid biosynthesis. The protein is Acyl carrier protein of Erythrobacter litoralis (strain HTCC2594).